We begin with the raw amino-acid sequence, 184 residues long: Protein MEH1 (184 aa).

Gly-2 carries N-myristoyl glycine lipidation. S-palmitoyl cysteine attachment occurs at residues Cys-7 and Cys-8. Residues 30–71 are a coiled coil; the sequence is QGNANDEYDAEQMRLKEHEHEQKLLAREQELRDIVANTNDKL. The segment at 89 to 147 is disordered; that stretch reads LQEALDKRQQEEGGDSREDERSAGDDNLSGHSVPSSGSAQATTHQTAPRTNTFTLLTSP. Positions 92 to 112 are enriched in basic and acidic residues; the sequence is ALDKRQQEEGGDSREDERSAG. Polar residues predominate over residues 117-147; it reads SGHSVPSSGSAQATTHQTAPRTNTFTLLTSP. Residues Ser-146 and Ser-149 each carry the phosphoserine modification.

As to quaternary structure, component of the GSE complex composed of GTR1, GTR2, SLM4, MEH1 and LTV1. Component of the EGO complex, at least composed of GTR2, SLM4 and MEH1.

The protein localises to the vacuole membrane. In terms of biological role, component of the GSE complex, a GTPase complex required for intracellular sorting of GAP1 out of the endosome. Component of the EGO complex, a complex involved in the regulation of microautophagy. In Saccharomyces cerevisiae (strain ATCC 204508 / S288c) (Baker's yeast), this protein is Protein MEH1 (MEH1).